The sequence spans 325 residues: Cytochrome c biogenesis protein CcsA (325 aa).

8 consecutive transmembrane segments (helical) span residues 12 to 32, 45 to 65, 72 to 92, 100 to 120, 145 to 165, 231 to 251, 264 to 281, and 293 to 313; these read HISF…LLFV, GMII…VFSG, LYES…VPYF, LNTI…SGLL, MILG…ILVI, TISL…VWAN, ETWA…LHTR, and IVAS…NLLG.

It belongs to the CcmF/CycK/Ccl1/NrfE/CcsA family. As to quaternary structure, may interact with Ccs1.

It localises to the plastid. The protein localises to the chloroplast thylakoid membrane. Its function is as follows. Required during biogenesis of c-type cytochromes (cytochrome c6 and cytochrome f) at the step of heme attachment. The chain is Cytochrome c biogenesis protein CcsA from Glycine max (Soybean).